The sequence spans 460 residues: tRNA modification GTPase MnmE (460 aa).

Residues Arg26, Glu88, and Arg127 each coordinate (6S)-5-formyl-5,6,7,8-tetrahydrofolate. A TrmE-type G domain is found at 222–381 (GLKVAIVGRP…LESAILSKVQ (160 aa)). Asn232 serves as a coordination point for K(+). GTP is bound by residues 232-237 (NVGKSS), 251-257 (TELPGTT), and 276-279 (DTAG). Position 236 (Ser236) interacts with Mg(2+). K(+) is bound by residues Thr251, Leu253, and Thr256. Mg(2+) is bound at residue Thr257. Lys460 serves as a coordination point for (6S)-5-formyl-5,6,7,8-tetrahydrofolate.

The protein belongs to the TRAFAC class TrmE-Era-EngA-EngB-Septin-like GTPase superfamily. TrmE GTPase family. In terms of assembly, homodimer. Heterotetramer of two MnmE and two MnmG subunits. K(+) serves as cofactor.

Its subcellular location is the cytoplasm. Exhibits a very high intrinsic GTPase hydrolysis rate. Involved in the addition of a carboxymethylaminomethyl (cmnm) group at the wobble position (U34) of certain tRNAs, forming tRNA-cmnm(5)s(2)U34. The chain is tRNA modification GTPase MnmE from Cyanothece sp. (strain PCC 7425 / ATCC 29141).